We begin with the raw amino-acid sequence, 217 residues long: Uridylate kinase (217 aa).

Residue 6 to 10 (KLSGR) coordinates ATP. A UMP-binding site is contributed by G38. The ATP site is built by G39 and R43. Residues D60 and 107–113 (FQPGQST) each bind UMP. Positions 134, 139, and 142 each coordinate ATP.

This sequence belongs to the UMP kinase family. In terms of assembly, homohexamer.

The protein localises to the cytoplasm. It catalyses the reaction UMP + ATP = UDP + ADP. It functions in the pathway pyrimidine metabolism; CTP biosynthesis via de novo pathway; UDP from UMP (UMPK route): step 1/1. With respect to regulation, inhibited by UTP. In terms of biological role, catalyzes the reversible phosphorylation of UMP to UDP. The polypeptide is Uridylate kinase (Pyrobaculum aerophilum (strain ATCC 51768 / DSM 7523 / JCM 9630 / CIP 104966 / NBRC 100827 / IM2)).